Consider the following 968-residue polypeptide: Ribonuclease E (968 aa).

The region spanning 39–119 (SNIYKGKITR…GTKGAALTTF (81 aa)) is the S1 motif domain. Mg(2+) contacts are provided by aspartate 303 and aspartate 346. Residues cysteine 404 and cysteine 407 each contribute to the Zn(2+) site. A required for zinc-mediated homotetramerization and catalytic activity region spans residues 404-407 (CPRC). The interval 947 to 968 (IKNSAGAHSATNFSTSPVKKSE) is disordered. Positions 955–968 (SATNFSTSPVKKSE) are enriched in polar residues.

Belongs to the RNase E/G family. RNase E subfamily. In terms of assembly, component of the RNA degradosome, which is a multiprotein complex involved in RNA processing and mRNA degradation. Within the RNA degradosome, RNase E assembles into a homotetramer formed by a dimer of dimers. Requires Zn(2+) as cofactor. It depends on Mg(2+) as a cofactor.

The protein localises to the cytoplasm. It localises to the cell inner membrane. It catalyses the reaction Endonucleolytic cleavage of single-stranded RNA in A- and U-rich regions.. Endoribonuclease that plays a central role in RNA processing and decay. Required for the maturation of 5S and 16S rRNAs and the majority of tRNAs. Also involved in the degradation of most mRNAs. The sequence is that of Ribonuclease E from Buchnera aphidicola subsp. Schizaphis graminum (strain Sg).